Consider the following 304-residue polypeptide: Pyridoxal 5'-phosphate synthase subunit PdxS (304 aa).

D34 contributes to the D-ribose 5-phosphate binding site. K91 acts as the Schiff-base intermediate with D-ribose 5-phosphate in catalysis. G163 provides a ligand contact to D-ribose 5-phosphate. R175 contacts D-glyceraldehyde 3-phosphate. D-ribose 5-phosphate-binding positions include G224 and 245–246; that span reads GS.

Belongs to the PdxS/SNZ family. In terms of assembly, in the presence of PdxT, forms a dodecamer of heterodimers.

The catalysed reaction is aldehydo-D-ribose 5-phosphate + D-glyceraldehyde 3-phosphate + L-glutamine = pyridoxal 5'-phosphate + L-glutamate + phosphate + 3 H2O + H(+). The protein operates within cofactor biosynthesis; pyridoxal 5'-phosphate biosynthesis. Its function is as follows. Catalyzes the formation of pyridoxal 5'-phosphate from ribose 5-phosphate (RBP), glyceraldehyde 3-phosphate (G3P) and ammonia. The ammonia is provided by the PdxT subunit. Can also use ribulose 5-phosphate and dihydroxyacetone phosphate as substrates, resulting from enzyme-catalyzed isomerization of RBP and G3P, respectively. This is Pyridoxal 5'-phosphate synthase subunit PdxS from Streptomyces avermitilis (strain ATCC 31267 / DSM 46492 / JCM 5070 / NBRC 14893 / NCIMB 12804 / NRRL 8165 / MA-4680).